The primary structure comprises 422 residues: ORC1-type DNA replication protein 13 (422 aa).

ATP contacts are provided by residues 80–84 (TGKTL), Tyr-231, and Arg-243.

The protein belongs to the CDC6/cdc18 family.

In terms of biological role, involved in regulation of DNA replication. The sequence is that of ORC1-type DNA replication protein 13 (cdc6m) from Haloarcula marismortui (strain ATCC 43049 / DSM 3752 / JCM 8966 / VKM B-1809) (Halobacterium marismortui).